A 101-amino-acid chain; its full sequence is Integration host factor subunit beta (101 aa).

The disordered stretch occupies residues 57-77 (PARAGRNPRTGAHVPVDQKSV).

Belongs to the bacterial histone-like protein family. As to quaternary structure, heterodimer of an alpha and a beta chain.

In terms of biological role, this protein is one of the two subunits of integration host factor, a specific DNA-binding protein that functions in genetic recombination as well as in transcriptional and translational control. The polypeptide is Integration host factor subunit beta (Rhodopseudomonas palustris (strain HaA2)).